Here is a 437-residue protein sequence, read N- to C-terminus: Trigger factor (437 aa).

The 86-residue stretch at 163–248 (SDRVIIDFEG…LNNVSEATLP (86 aa)) folds into the PPIase FKBP-type domain.

The protein belongs to the FKBP-type PPIase family. Tig subfamily.

It localises to the cytoplasm. The catalysed reaction is [protein]-peptidylproline (omega=180) = [protein]-peptidylproline (omega=0). In terms of biological role, involved in protein export. Acts as a chaperone by maintaining the newly synthesized protein in an open conformation. Functions as a peptidyl-prolyl cis-trans isomerase. The sequence is that of Trigger factor from Neisseria meningitidis serogroup C / serotype 2a (strain ATCC 700532 / DSM 15464 / FAM18).